The primary structure comprises 204 residues: ATP-dependent Clp protease proteolytic subunit (204 aa).

The active-site Nucleophile is the Ser101. Residue His126 is part of the active site.

This sequence belongs to the peptidase S14 family. Fourteen ClpP subunits assemble into 2 heptameric rings which stack back to back to give a disk-like structure with a central cavity, resembling the structure of eukaryotic proteasomes.

It is found in the cytoplasm. It catalyses the reaction Hydrolysis of proteins to small peptides in the presence of ATP and magnesium. alpha-casein is the usual test substrate. In the absence of ATP, only oligopeptides shorter than five residues are hydrolyzed (such as succinyl-Leu-Tyr-|-NHMec, and Leu-Tyr-Leu-|-Tyr-Trp, in which cleavage of the -Tyr-|-Leu- and -Tyr-|-Trp bonds also occurs).. Its function is as follows. Cleaves peptides in various proteins in a process that requires ATP hydrolysis. Has a chymotrypsin-like activity. Plays a major role in the degradation of misfolded proteins. The protein is ATP-dependent Clp protease proteolytic subunit of Deinococcus radiodurans (strain ATCC 13939 / DSM 20539 / JCM 16871 / CCUG 27074 / LMG 4051 / NBRC 15346 / NCIMB 9279 / VKM B-1422 / R1).